The primary structure comprises 49 residues: Large ribosomal subunit protein bL33 (49 aa).

It belongs to the bacterial ribosomal protein bL33 family.

The protein is Large ribosomal subunit protein bL33 of Clostridium beijerinckii (strain ATCC 51743 / NCIMB 8052) (Clostridium acetobutylicum).